Consider the following 187-residue polypeptide: Troponin I, slow skeletal muscle (187 aa).

P2 bears the N-acetylproline mark. An involved in binding TNC region spans residues 2 to 48 (PEVERKSKITASRKLMLKSLMLAKAKECWEQEHEEREAEKVRYLSER). S58 is modified (phosphoserine). The involved in binding TNC and actin stretch occupies residues 97-118 (LKLKVLDLRGKFKRPPLRRVRV).

The protein belongs to the troponin I family. In terms of assembly, binds to actin and tropomyosin.

Its function is as follows. Troponin I is the inhibitory subunit of troponin, the thin filament regulatory complex which confers calcium-sensitivity to striated muscle actomyosin ATPase activity. The chain is Troponin I, slow skeletal muscle (Tnni1) from Mus musculus (Mouse).